Here is a 121-residue protein sequence, read N- to C-terminus: Large ribosomal subunit protein uL18 (121 aa).

Belongs to the universal ribosomal protein uL18 family. As to quaternary structure, part of the 50S ribosomal subunit; part of the 5S rRNA/L5/L18/L25 subcomplex. Contacts the 5S and 23S rRNAs.

This is one of the proteins that bind and probably mediate the attachment of the 5S RNA into the large ribosomal subunit, where it forms part of the central protuberance. The sequence is that of Large ribosomal subunit protein uL18 from Dehalococcoides mccartyi (strain ATCC BAA-2266 / KCTC 15142 / 195) (Dehalococcoides ethenogenes (strain 195)).